The sequence spans 206 residues: High frequency lysogenization protein HflD homolog (206 aa).

This sequence belongs to the HflD family.

It localises to the cytoplasm. Its subcellular location is the cell inner membrane. This Ectopseudomonas mendocina (strain ymp) (Pseudomonas mendocina) protein is High frequency lysogenization protein HflD homolog.